Here is a 239-residue protein sequence, read N- to C-terminus: 1-(5-phosphoribosyl)-5-[(5-phosphoribosylamino)methylideneamino] imidazole-4-carboxamide isomerase (239 aa).

D8 serves as the catalytic Proton acceptor. D129 functions as the Proton donor in the catalytic mechanism.

It belongs to the HisA/HisF family.

The protein localises to the cytoplasm. The catalysed reaction is 1-(5-phospho-beta-D-ribosyl)-5-[(5-phospho-beta-D-ribosylamino)methylideneamino]imidazole-4-carboxamide = 5-[(5-phospho-1-deoxy-D-ribulos-1-ylimino)methylamino]-1-(5-phospho-beta-D-ribosyl)imidazole-4-carboxamide. The protein operates within amino-acid biosynthesis; L-histidine biosynthesis; L-histidine from 5-phospho-alpha-D-ribose 1-diphosphate: step 4/9. The sequence is that of 1-(5-phosphoribosyl)-5-[(5-phosphoribosylamino)methylideneamino] imidazole-4-carboxamide isomerase from Bacillus cereus (strain Q1).